Consider the following 336-residue polypeptide: Glutamyl endopeptidase (336 aa).

The N-terminal stretch at 1-29 is a signal peptide; sequence MKGKFLKVSSLFVATLTTATLVSSPAANA. A propeptide spanning residues 30 to 68 is cleaved from the precursor; that stretch reads LSSKAMDNHPQQTQSSKQQTPKIQKGGNLKPLEQREHAN. The tract at residues 34–61 is disordered; the sequence is AMDNHPQQTQSSKQQTPKIQKGGNLKPL. A compositionally biased stretch (low complexity) spans 39–51; sequence PQQTQSSKQQTPK. Residues H119, D161, and S237 each act as charge relay system in the active site. Residues 283–336 form a disordered region; it reads FANDDQPNNPDNPDNPNNPDNPNNPDEPNNPDNPNNPDNPDNGDNNNSDNPDAA. A compositionally biased stretch (low complexity) spans 286–336; the sequence is DDQPNNPDNPDNPNNPDNPNNPDEPNNPDNPNNPDNPDNGDNNNSDNPDAA. Tandem repeats lie at residues 289–291, 292–294, 295–297, 298–300, 301–303, 304–306, 310–312, 313–315, 316–318, 319–321, and 322–324. Residues 289–324 form an 11 X 3 AA repeats of P-[DN]-N region; the sequence is PNNPDNPDNPNNPDNPNNPDEPNNPDNPNNPDNPDN.

Belongs to the peptidase S1B family. Post-translationally, proteolytically cleaved by aureolysin (aur). This cleavage leads to the activation of SspA.

The protein localises to the secreted. It catalyses the reaction Preferential cleavage: Glu-|-Xaa, Asp-|-Xaa.. Preferentially cleaves peptide bonds on the carboxyl-terminal side of aspartate and glutamate. Along with other extracellular proteases it is involved in colonization and infection of human tissues. Required for proteolytic maturation of thiol protease SspB and inactivation of SspC, an inhibitor of SspB. It is the most important protease for degradation of fibronectin-binding protein (FnBP) and surface protein A, which are involved in adherence to host cells. May also protect bacteria against host defense mechanism by cleaving the immunoglobulin classes IgG, IgA and IgM. May be involved in the stability of secreted lipases. The chain is Glutamyl endopeptidase (sspA) from Staphylococcus aureus (strain NCTC 8325 / PS 47).